The chain runs to 469 residues: Sorting and assembly machinery component 50 homolog (469 aa).

The POTRA domain occupies 45–125 (VVVQHVHFDG…LDVTFEVTEL (81 aa)). Residue lysine 255 is modified to N6-methyllysine.

The protein belongs to the SAM50/omp85 family. As to quaternary structure, associates with the mitochondrial contact site and cristae organizing system (MICOS) complex, composed of at least MICOS10/MIC10, CHCHD3/MIC19, CHCHD6/MIC25, APOOL/MIC27, IMMT/MIC60, APOO/MIC23/MIC26 and QIL1/MIC13. This complex was also known under the names MINOS or MitOS complex. The MICOS complex associates with mitochondrial outer membrane proteins SAMM50, MTX1 and MTX2 (together described as components of the mitochondrial outer membrane sorting assembly machinery (SAM) complex) and DNAJC11, mitochondrial inner membrane protein TMEM11 and with HSPA9. The MICOS and SAM complexes together with DNAJC11 are part of a large protein complex spanning both membranes termed the mitochondrial intermembrane space bridging (MIB) complex. Interacts with IMMT/MIC60. Interacts with CHCHD3/MIC19. Interacts with ARMC1. In terms of assembly, (Microbial infection) Interacts with parasite T.gondii RH strain MAF1b1; the interaction is probably indirect and results in the disruption of the MIB complex and the formation of SPOTs (structures positive for outer mitochondrial membrane (OMM)), a cellular response to OMM stress, which leads to the constitutive shedding of OMM vesicles.

It is found in the mitochondrion outer membrane. Its subcellular location is the cytoplasm. It localises to the mitochondrion. Functionally, plays a crucial role in the maintenance of the structure of mitochondrial cristae and the proper assembly of the mitochondrial respiratory chain complexes. Required for the assembly of TOMM40 into the TOM complex. This chain is Sorting and assembly machinery component 50 homolog (Samm50), found in Mus musculus (Mouse).